We begin with the raw amino-acid sequence, 120 residues long: UPF0102 protein FRAAL5785 (120 aa).

The protein belongs to the UPF0102 family.

The polypeptide is UPF0102 protein FRAAL5785 (Frankia alni (strain DSM 45986 / CECT 9034 / ACN14a)).